Here is a 31-residue protein sequence, read N- to C-terminus: Cytochrome b6-f complex subunit 6 (31 aa).

The chain crosses the membrane as a helical span at residues 4–24; it reads ITSYFGFLLAALTITSALFIG.

Belongs to the PetL family. As to quaternary structure, the 4 large subunits of the cytochrome b6-f complex are cytochrome b6, subunit IV (17 kDa polypeptide, PetD), cytochrome f and the Rieske protein, while the 4 small subunits are PetG, PetL, PetM and PetN. The complex functions as a dimer.

It is found in the plastid. The protein resides in the chloroplast thylakoid membrane. Functionally, component of the cytochrome b6-f complex, which mediates electron transfer between photosystem II (PSII) and photosystem I (PSI), cyclic electron flow around PSI, and state transitions. PetL is important for photoautotrophic growth as well as for electron transfer efficiency and stability of the cytochrome b6-f complex. In Humulus lupulus (European hop), this protein is Cytochrome b6-f complex subunit 6.